A 383-amino-acid chain; its full sequence is Lipid-A-disaccharide synthase (383 aa).

This sequence belongs to the LpxB family.

The catalysed reaction is 2-N,3-O-bis[(3R)-3-hydroxytetradecanoyl]-alpha-D-glucosaminyl 1-phosphate + UDP-2-N,3-O-bis[(3R)-3-hydroxytetradecanoyl]-alpha-D-glucosamine = lipid A disaccharide (E. coli) + UDP + H(+). It carries out the reaction a lipid X + a UDP-2-N,3-O-bis[(3R)-3-hydroxyacyl]-alpha-D-glucosamine = a lipid A disaccharide + UDP + H(+). The protein operates within glycolipid biosynthesis; lipid IV(A) biosynthesis; lipid IV(A) from (3R)-3-hydroxytetradecanoyl-[acyl-carrier-protein] and UDP-N-acetyl-alpha-D-glucosamine: step 5/6. In terms of biological role, condensation of UDP-2,3-diacylglucosamine and 2,3-diacylglucosamine-1-phosphate to form lipid A disaccharide, a precursor of lipid A, a phosphorylated glycolipid that anchors the lipopolysaccharide to the outer membrane of the cell. The chain is Lipid-A-disaccharide synthase from Klebsiella pneumoniae subsp. pneumoniae (strain ATCC 700721 / MGH 78578).